A 58-amino-acid polypeptide reads, in one-letter code: UPF0339 protein Msl4696 (58 aa).

Belongs to the UPF0339 family.

This chain is UPF0339 protein Msl4696, found in Mesorhizobium japonicum (strain LMG 29417 / CECT 9101 / MAFF 303099) (Mesorhizobium loti (strain MAFF 303099)).